The primary structure comprises 557 residues: QTCSTSDDADDPTPPNERDDEAFASRVAAAKRELEGTGTVCQINNGETDLAAKFHKSLPHDDLGQVDADAFAALEDCILNGDLSICEDVPVGNSEGDPVGRLVNPTAAFAIDISGPAFSATTIPPVPTLPSPELAAQLAEVYWMALARDVPFMQYGTDDITVTAAANLAGMEGFPNLDAVSIGSDGTVDPLSQLFRATFVGVETGPFISQLLVNSFTIDSITVEPKQETFAPDVNYMVDFDEWLNIQNGGPPAGPELLDDELRFVRNARDLARVTFTDNINTEAYRGALILLGLDAFNRAGVNGPFIDIDRQAGFVNFGISHYFRLIGAAELAQRSSWYQKWQVHRFARPEALGGTLHLTIKGELNADFDLSLLENAELLKRVAAINAAQNPNNEVTYLLPQAIQEGSPTHPSYPSGHATQNGAFATVLKALIGLDRGGDCYPDPVYPDDDGLKLIDFRGSCLTFEGEINKLAVNVAFGRQMLGIHYRFDGIQGLLLGETITVRTLHQELMTFAEESTFEFRLFTGEVIKLFQDGTFTIDGFKCPGLVYTGVENCVS.

Position 1 is a pyrrolidone carboxylic acid (Gln1). The segment at 1 to 22 (QTCSTSDDADDPTPPNERDDEA) is disordered. Cysteines 77 and 86 form a disulfide. Residues Lys341 and Arg349 each contribute to the vanadate site. His411 is an active-site residue. Ser416, Gly417, and His418 together coordinate vanadate. The active site involves His418. A disulfide bridge connects residues Cys441 and Cys462. Positions 480 and 486 each coordinate vanadate. A disulfide bond links Cys544 and Cys555.

Belongs to the vanadium-dependent haloperoxidase family. Homodimer; disulfide-linked. Vanadate is required as a cofactor.

It carries out the reaction RH + Br(-) + H2O2 = RBr + 2 H2O.. In terms of biological role, catalyzes the halogenation of organic substrates in the presence of hydrogen peroxide. This Ascophyllum nodosum (Knotted wrack) protein is Vanadium-dependent bromoperoxidase.